Reading from the N-terminus, the 261-residue chain is Cell division protein B (261 aa).

The segment at 213 to 261 (SEDMILNYIKTTGGFIDVDYIAKNFDVSKDEVFNVLRRLEEKGLIVLEG) is winged-helix-like fold.

In terms of assembly, interacts with CdvA. Interacts with CdvC.

The protein localises to the cytoplasm. It is found in the nucleoid. Its function is as follows. Part of a cell division machinery. The CdvA, CdvB and CdvC proteins polymerize between segregating nucleoids and persist throughout cell division, forming a successively smaller structure during constriction. In Sulfolobus acidocaldarius (strain ATCC 33909 / DSM 639 / JCM 8929 / NBRC 15157 / NCIMB 11770), this protein is Cell division protein B.